A 123-amino-acid polypeptide reads, in one-letter code: Small ribosomal subunit protein uS12 (123 aa).

Residues 1–28 (MPTIQQLIRKPREPKRVRSKSQHLESCP) form a disordered region. Residue Asp89 is modified to 3-methylthioaspartic acid.

Belongs to the universal ribosomal protein uS12 family. As to quaternary structure, part of the 30S ribosomal subunit. Contacts proteins S8 and S17. May interact with IF1 in the 30S initiation complex.

With S4 and S5 plays an important role in translational accuracy. Its function is as follows. Interacts with and stabilizes bases of the 16S rRNA that are involved in tRNA selection in the A site and with the mRNA backbone. Located at the interface of the 30S and 50S subunits, it traverses the body of the 30S subunit contacting proteins on the other side and probably holding the rRNA structure together. The combined cluster of proteins S8, S12 and S17 appears to hold together the shoulder and platform of the 30S subunit. This chain is Small ribosomal subunit protein uS12, found in Cereibacter sphaeroides (strain ATCC 17029 / ATH 2.4.9) (Rhodobacter sphaeroides).